We begin with the raw amino-acid sequence, 443 residues long: Serine transporter (443 aa).

The next 11 helical transmembrane spans lie at 38–60 (TGWV…PVQV), 65–87 (LWVF…RLFI), 111–131 (WGIL…FVYS), 150–170 (GLLS…VAIS), 183–203 (GMVL…VGMW), 215–235 (GLLV…ILFI), 265–285 (IAFG…TLAM), 319–339 (VSVI…YLGF), 368–388 (GIMI…APVL), 390–410 (FTSI…AWLV), and 422–442 (MSLY…FLAF).

Belongs to the amino acid/polyamine transporter 2 family. SdaC/TdcC subfamily.

The protein resides in the cell inner membrane. In terms of biological role, transports both D- and L-serine; allows growth of strain CFT073 cells normally unable to transport D-serine on that substrate. Transport relies on the H(+) gradient and is not competed by L-threonine. May play a role in L-cysteine detoxification. This chain is Serine transporter, found in Escherichia coli O157:H7.